Reading from the N-terminus, the 777-residue chain is Protein argonaute (777 aa).

The tract at residues 1-107 (MAPVQAADEM…ARLDDALEEA (107 aa)) is N-terminal domain. Positions 108–182 (LPKYAAVKKR…TIGMRYDIEA (75 aa)) are linker L1. The tract at residues 183–243 (SLRDLLEAGI…VNVNDAKLEG (61 aa)) is PAZ domain. The interval 244–341 (SKENFTRCLS…DRTGAKSAEY (98 aa)) is linker L2. The segment at 342–509 (AWRGLSQFGP…SIATYAKLNG (168 aa)) is mid domain. The 313-residue stretch at 445 to 757 (GIVVLFEDHA…IAELLGRLKS (313 aa)) folds into the Piwi domain. Residues 510–777 (TPWTVNHDKA…IKLKWSRWFL (268 aa)) form a PIWI domain region. Position 777 (Leu-777) interacts with Mg(2+).

Belongs to the argonaute family. Long pAgo subfamily. It depends on Mg(2+) as a cofactor.

Functionally, a catalytically inactive argonaute protein. Binds 5'-phosphorylated RNA as the guide (gRNA) and short DNA as target DNA (tDNA); does not bind other nucleic acid combinations, does not bind tDNA alone. Has highest affinity for gRNA that begins with 5'-phospho-U and poor affinity for gRNA with 5'-OH. Upon expression in E.coli, plasmid sequences are found in RsAgo, its induction leads to plasmid degradation and suppression of genes encoded on foreign plasmids, suggesting it may also interfere with transcription. Does not interact with preformed gRNA:tDNA duplexes. Mismatches and nt bulges are tolerated in the ternary complex, however, they significantly reduce the affinity of RsAgo:gRNA for tDNA. Mismatched tDNA can cause dissociation of gRNA from RsAgo. In situ binds 2 populations of RNA (15-19 and 45 nucleotides, nt) and a population of ssDNA 22-24 nt in length. The small sense RNA is probably derived from mRNA degradation and strongly enriched for U in the first and U/C in the second positions. The small DNA is enriched for sequences complementary to the RNA, with 3 nt overhangs on both ends; another nuclease may trim the ends. The sequences are largely derived from exogenous plasmids or genome-encoded foreign elements such as prophages and transposons. Forms a ternary complex with gRNA and double-stranded tDNA only when the tDNA is open. This Cereibacter sphaeroides (strain ATCC 17025 / ATH 2.4.3) (Rhodobacter sphaeroides) protein is Protein argonaute.